The chain runs to 279 residues: Probable endonuclease 4 (279 aa).

Residues His-66, His-106, Glu-142, Asp-176, His-179, His-213, Asp-226, His-228, and Glu-258 each contribute to the Zn(2+) site.

Belongs to the AP endonuclease 2 family. Zn(2+) serves as cofactor.

The catalysed reaction is Endonucleolytic cleavage to 5'-phosphooligonucleotide end-products.. Endonuclease IV plays a role in DNA repair. It cleaves phosphodiester bonds at apurinic or apyrimidinic (AP) sites, generating a 3'-hydroxyl group and a 5'-terminal sugar phosphate. The chain is Probable endonuclease 4 from Photobacterium profundum (strain SS9).